The following is a 147-amino-acid chain: MIRRRKKVRKLRGSHTHGWGCKKKHRGGGSKGGRGMAGTGKRNKSKWTWTIKYAPDHLGKRGFSRPPEVQRDVRIVTLKFIDEHLEDLLQMGIAYEEEGKIVVDTTQFADKVLGTGRLTRPLTIKAKAFSAKAEEKIKAAGGEVILA.

Basic residues predominate over residues 1 to 28 (MIRRRKKVRKLRGSHTHGWGCKKKHRGG). The interval 1–43 (MIRRRKKVRKLRGSHTHGWGCKKKHRGGGSKGGRGMAGTGKRN) is disordered. Residues 29–38 (GSKGGRGMAG) are compositionally biased toward gly residues.

Belongs to the universal ribosomal protein uL15 family. In terms of assembly, part of the 50S ribosomal subunit.

Binds to the 23S rRNA. The chain is Large ribosomal subunit protein uL15 from Pyrococcus horikoshii (strain ATCC 700860 / DSM 12428 / JCM 9974 / NBRC 100139 / OT-3).